The primary structure comprises 217 residues: Enoyl-CoA-hydratase (217 aa).

It belongs to the enoyl-CoA hydratase/isomerase family.

It catalyses the reaction a (3S)-3-hydroxyacyl-CoA = a (2E)-enoyl-CoA + H2O. The catalysed reaction is a 4-saturated-(3S)-3-hydroxyacyl-CoA = a (3E)-enoyl-CoA + H2O. It participates in antibiotic biosynthesis; vancomycin biosynthesis. Functionally, involved in the biosynthesis of the nonproteinogenic amino acid monomer (S)-3,5-dihydroxyphenylglycine (Dpg) responsible of the production of vancomycin and teicoplanin antibiotics. Catalyzes the syn-addition of a water molecule across the double bond of a trans-2-enoyl-CoA thioester, resulting in the formation of a beta-hydroxyacyl-CoA thioester. Physiologically, DpgB could act as a dehydratase, facilitating the aromatization of the DPA-S-DgpA or DPA-S-CoA intermediate. The polypeptide is Enoyl-CoA-hydratase (dpgB) (Amycolatopsis orientalis (Nocardia orientalis)).